A 318-amino-acid chain; its full sequence is MDQDALISKEDSEVEREASGGRESLSDVIGFLDAVLSSEPTDIGGDRSWLHNTINTLQRPGSTHRVKGEGEGEVSTSSTQDNRSGEESRVSGGTSEPEAEAHARNVDKQNIHWATGRGASTDSVPQDLGNGRDSGILEDPPNEGGYPRSGAEDENREMAANPDKRGEDQAEGLPEEIRRSAPLPDEREGRADNNGRGVEPGSPHSARVTGVLVIPSPELEEAVLQRNKRRPANSGSRSLTPVVVPSTRSPPPDHDNSTRSPPRKPPTTQDEHTNPRNTPAVRIKDRRPPTGTRSAPDRPTDGYPTHPSPETDATKKGA.

Disordered regions lie at residues 1–23 and 54–318; these read MDQDALISKEDSEVEREASGGRE and INTL…KKGA. Composition is skewed to basic and acidic residues over residues 7–20, 99–110, 150–168, and 175–193; these read ISKEDSEVEREASG, AEAHARNVDKQN, GAEDENREMAANPDKRGED, and EEIRRSAPLPDEREGRADN. Phosphoserine; by host is present on residues S249, S257, and S260.

This is Protein W (P/V/C) from Sendai virus (strain Ohita) (SeV).